Here is an 89-residue protein sequence, read N- to C-terminus: Small ribosomal subunit protein uS15 (89 aa).

It belongs to the universal ribosomal protein uS15 family. In terms of assembly, part of the 30S ribosomal subunit. Forms a bridge to the 50S subunit in the 70S ribosome, contacting the 23S rRNA.

In terms of biological role, one of the primary rRNA binding proteins, it binds directly to 16S rRNA where it helps nucleate assembly of the platform of the 30S subunit by binding and bridging several RNA helices of the 16S rRNA. Functionally, forms an intersubunit bridge (bridge B4) with the 23S rRNA of the 50S subunit in the ribosome. The sequence is that of Small ribosomal subunit protein uS15 from Photorhabdus laumondii subsp. laumondii (strain DSM 15139 / CIP 105565 / TT01) (Photorhabdus luminescens subsp. laumondii).